The sequence spans 481 residues: Serine/threonine-protein kinase US3 (481 aa).

The interval 12-63 is disordered; it reads GQGRRKEEAVPPETKPSRVFPHGPFYTPAEDACLDSPPPETPKPSHTTPPSE. The Protein kinase domain maps to 191-478; that stretch reads FTIHGALTPG…AAELLCLPLF (288 aa). ATP is bound by residues 197–205 and lysine 220; that span reads LTPGSEGCV. The Proton acceptor role is filled by aspartate 305.

The protein belongs to the protein kinase superfamily. Ser/Thr protein kinase family. Interacts with host LAT; this interaction prevents LAT activation of TRAF6. Post-translationally, phosphorylated by UL13; this phosphorylation regulates subsequent phosphorylation of UL31 and UL34 by US3. Autophosphorylated.

Its subcellular location is the host cytoplasm. The protein localises to the host nucleus. It carries out the reaction L-seryl-[protein] + ATP = O-phospho-L-seryl-[protein] + ADP + H(+). It catalyses the reaction L-threonyl-[protein] + ATP = O-phospho-L-threonyl-[protein] + ADP + H(+). In terms of biological role, multifunctional serine/threonine kinase that plays a role in several processes including egress of virus particles from the nucleus, modulation of the actin cytoskeleton and inhibition of host immune response. Phosphorylates UL31 and UL34, two critical regulators of capsid budding from nucleus to endoplasmic reticulum, thereby facilitating virion egress. Modulates and redistributes host components of the nuclear envelope, including LMNA, emerin/EMD and the nuclear matrix protein MATR3. In turn, facilitates nuclear pore impairment and capsid release through impaired nuclear envelope. Phosphorylates envelope glycoprotein B (gB), probably to direct it to the cell surface. Promotes virus intracellular spread by restructuring host cell cytoskeleton. Blocks host apoptosis to extend cell survival and allow efficient viral replication. Promotes viral gene expression by phosphorylating host HDAC2 to reduce viral genome silencing. Strongly inhibits TCR-activated signal transduction in T-cells by reducing the ubiquitination of LAT and TRAF6, leading to a suboptimal activation of LAT. Subverts host antiviral innate immunity by inhibiting type I interferon production through hyperphosphorylation of beta-catenin/CTNNB1. In addition, phosphorylates the RNA sensor RIGI and the transcription factor IRF3 to prevent the RLR-mediated antiviral signaling pathway. Hyperphosphorylates host RELA and thereby dampens NF-kappa-B signaling. Acts as an immunoevasin partly responsible for inhibition of MR1 expression and antigen presentation in response to bacterial infection. This Human herpesvirus 1 (strain 17) (HHV-1) protein is Serine/threonine-protein kinase US3 (US3).